The chain runs to 484 residues: Chromosomal replication initiator protein DnaA (484 aa).

Positions 1–73 (MQEGKNIWSL…EILIEKGHNT (73 aa)) are domain I, interacts with DnaA modulators. The segment at 73–140 (TINVEFINSP…EEIHTKYRNP (68 aa)) is domain II. A domain III, AAA+ region region spans residues 141–357 (FLKKKYTFEN…AAVTKLKAHI (217 aa)). Residues G185, G187, K188, and T189 each coordinate ATP. The interval 358–484 (DLEDIEIDTS…IELMNKINKK (127 aa)) is domain IV, binds dsDNA.

Belongs to the DnaA family. Oligomerizes as a right-handed, spiral filament on DNA at oriC.

It localises to the cytoplasm. Its function is as follows. Plays an essential role in the initiation and regulation of chromosomal replication. ATP-DnaA binds to the origin of replication (oriC) to initiate formation of the DNA replication initiation complex once per cell cycle. Binds the DnaA box (a 9 base pair repeat at the origin) and separates the double-stranded (ds)DNA. Forms a right-handed helical filament on oriC DNA; dsDNA binds to the exterior of the filament while single-stranded (ss)DNA is stabiized in the filament's interior. The ATP-DnaA-oriC complex binds and stabilizes one strand of the AT-rich DNA unwinding element (DUE), permitting loading of DNA polymerase. After initiation quickly degrades to an ADP-DnaA complex that is not apt for DNA replication. Binds acidic phospholipids. This Borrelia hermsii (strain HS1 / DAH) protein is Chromosomal replication initiator protein DnaA.